The chain runs to 110 residues: Endoribonuclease SymE (110 aa).

The SpoVT-AbrB domain maps to serine 29 to proline 74.

The protein belongs to the SymE family.

The protein resides in the cytoplasm. Functionally, involved in the degradation and recycling of damaged RNA. It is itself a target for degradation by the ATP-dependent protease Lon. The sequence is that of Endoribonuclease SymE from Salmonella choleraesuis (strain SC-B67).